We begin with the raw amino-acid sequence, 792 residues long: Phenylalanine--tRNA ligase beta subunit (792 aa).

Residues 39 to 147 form the tRNA-binding domain; the sequence is GESLGQVVVA…DDAPVGQALA (109 aa). Positions 400–475 constitute a B5 domain; the sequence is PQPVHIRLRR…RIHGYDRVPT (76 aa). Aspartate 453, aspartate 459, glutamate 462, and glutamate 463 together coordinate Mg(2+). The FDX-ACB domain maps to 698-791; that stretch reads SRFPSVRRDL…IEREHRARIR (94 aa).

The protein belongs to the phenylalanyl-tRNA synthetase beta subunit family. Type 1 subfamily. As to quaternary structure, tetramer of two alpha and two beta subunits. Mg(2+) is required as a cofactor.

The protein localises to the cytoplasm. It carries out the reaction tRNA(Phe) + L-phenylalanine + ATP = L-phenylalanyl-tRNA(Phe) + AMP + diphosphate + H(+). In Xanthomonas axonopodis pv. citri (strain 306), this protein is Phenylalanine--tRNA ligase beta subunit.